A 68-amino-acid polypeptide reads, in one-letter code: Venom peptide 3 (68 aa).

The signal sequence occupies residues 1 to 25 (MTKQSIVIVLFAAIAMMACLQRVTA). AXPX repeat units lie at residues 25-28 (AEPA), 33-36 (AAPI), 37-40 (AEPY), 41-44 (ANPE), and 47-50 (ASPE). A propeptide spanning residues 26–51 (EPAPEPIAAPIAEPYANPEAIASPEA) is cleaved from the precursor. At Leu65 the chain carries Leucine amide.

Expressed by the venom gland.

It is found in the secreted. Its subcellular location is the target cell membrane. Antimicrobial peptide with strong activity against the fungi B.cinerea (MIC=5 uM) and C.albicans (MIC=33 uM), and no activity against the Gram-negative bacterium E.coli (MIC&gt;200 uM) and the Gram-positive bacterium S.aureus (MIC&gt;200 uM). Shows cytolytic activity against insect cell lines. Has no hemolytic activity against human erythrocytes. In vivo, peptide injection in the vicinity of the head and thorax of lepidopteran larvae induces feeding disorder that lasts one or two days before recovering. The protein is Venom peptide 3 of Orancistrocerus drewseni (Solitary wasp).